Here is a 542-residue protein sequence, read N- to C-terminus: Chaperonin GroEL (542 aa).

ATP contacts are provided by residues 29 to 32 (TIGP), 86 to 90 (DGTTT), Gly-413, 477 to 479 (NAA), and Asp-493.

The protein belongs to the chaperonin (HSP60) family. In terms of assembly, forms a cylinder of 14 subunits composed of two heptameric rings stacked back-to-back. Interacts with the co-chaperonin GroES.

It is found in the cytoplasm. The catalysed reaction is ATP + H2O + a folded polypeptide = ADP + phosphate + an unfolded polypeptide.. Together with its co-chaperonin GroES, plays an essential role in assisting protein folding. The GroEL-GroES system forms a nano-cage that allows encapsulation of the non-native substrate proteins and provides a physical environment optimized to promote and accelerate protein folding. The chain is Chaperonin GroEL from Lactobacillus acidophilus (strain ATCC 700396 / NCK56 / N2 / NCFM).